The sequence spans 499 residues: Aspartyl/glutamyl-tRNA(Asn/Gln) amidotransferase subunit B (499 aa).

It belongs to the GatB/GatE family. GatB subfamily. As to quaternary structure, heterotrimer of A, B and C subunits.

The catalysed reaction is L-glutamyl-tRNA(Gln) + L-glutamine + ATP + H2O = L-glutaminyl-tRNA(Gln) + L-glutamate + ADP + phosphate + H(+). The enzyme catalyses L-aspartyl-tRNA(Asn) + L-glutamine + ATP + H2O = L-asparaginyl-tRNA(Asn) + L-glutamate + ADP + phosphate + 2 H(+). In terms of biological role, allows the formation of correctly charged Asn-tRNA(Asn) or Gln-tRNA(Gln) through the transamidation of misacylated Asp-tRNA(Asn) or Glu-tRNA(Gln) in organisms which lack either or both of asparaginyl-tRNA or glutaminyl-tRNA synthetases. The reaction takes place in the presence of glutamine and ATP through an activated phospho-Asp-tRNA(Asn) or phospho-Glu-tRNA(Gln). In Bifidobacterium longum (strain DJO10A), this protein is Aspartyl/glutamyl-tRNA(Asn/Gln) amidotransferase subunit B.